The sequence spans 719 residues: Polyribonucleotide nucleotidyltransferase (719 aa).

2 residues coordinate Mg(2+): Asp495 and Asp501. Residues 562-621 (PRRLSFRIDPELIGTVIGPGGRTIKGITERTNTKIDIEDTGIVTVASHDGAAAEEAQKII) form the KH domain. An S1 motif domain is found at 631 to 699 (GEYFDGKVTR…NRGRINLTLR (69 aa)). Residues 699–719 (RGVPQDGSDPQPTVILPIGES) form a disordered region.

Belongs to the polyribonucleotide nucleotidyltransferase family. Mg(2+) is required as a cofactor.

Its subcellular location is the cytoplasm. It carries out the reaction RNA(n+1) + phosphate = RNA(n) + a ribonucleoside 5'-diphosphate. Its function is as follows. Involved in mRNA degradation. Catalyzes the phosphorolysis of single-stranded polyribonucleotides processively in the 3'- to 5'-direction. This chain is Polyribonucleotide nucleotidyltransferase, found in Synechococcus sp. (strain RCC307).